A 343-amino-acid polypeptide reads, in one-letter code: N-acetyl-gamma-glutamyl-phosphate reductase (343 aa).

Residue Cys-147 is part of the active site.

Belongs to the NAGSA dehydrogenase family. Type 1 subfamily.

Its subcellular location is the cytoplasm. It catalyses the reaction N-acetyl-L-glutamate 5-semialdehyde + phosphate + NADP(+) = N-acetyl-L-glutamyl 5-phosphate + NADPH + H(+). It functions in the pathway amino-acid biosynthesis; L-arginine biosynthesis; N(2)-acetyl-L-ornithine from L-glutamate: step 3/4. Functionally, catalyzes the NADPH-dependent reduction of N-acetyl-5-glutamyl phosphate to yield N-acetyl-L-glutamate 5-semialdehyde. This Listeria monocytogenes serovar 1/2a (strain ATCC BAA-679 / EGD-e) protein is N-acetyl-gamma-glutamyl-phosphate reductase.